The chain runs to 230 residues: Transcription factor bHLH147 (230 aa).

Residues 1-17 (MESISPVSNQLLQPTTT) show a composition bias toward polar residues. Residues 1-52 (MESISPVSNQLLQPTTTSSNSDRSRRKRKKKSSPSSVEKSPSPSISLEKWRS) are disordered. Residues 33-46 (SPSSVEKSPSPSIS) show a composition bias toward low complexity. Positions 147-196 (KQRATVLRLKAKGLPAVQRKVKVLSRLVPGCRKQSLPVVLEETTDYIAAM) constitute a bHLH domain. Positions 210–230 (VSSSPPPPTPGHEGGQTHMLG) are disordered.

Homodimer. Interacts with PRE3.

It localises to the nucleus. Atypical bHLH transcription factor probably unable to bind DNA. Negatively regulates brassinosteroid signaling. The polypeptide is Transcription factor bHLH147 (BHLH147) (Arabidopsis thaliana (Mouse-ear cress)).